A 374-amino-acid chain; its full sequence is MPHKVSLSRLKLTDFRNYAAASLSLDGRHAVLTGDNGAGKTNLMEAVSLLSPGRGLRRAAYGDITRVGAAGGFSIFAALDGMEGEVEIGTGIEAGEETTARRLRINGTPAKTADELTDHLRLLWLIPAMDGLFTGASSDRRRFLDRLVLSLDPAHGRRASDFERAMRSRNKLLDDGRFDPSWLAGIEEQMASLGIAMALARQEMLGLLTRLTEETLESSPFPSASLQLSGFMDGQFSRPSVDLEDDYRVMLAESRYRDAGAGRTLEGPHRTDLVVHHREKAMEAARCSTGEQKALLVGLVLAHARLVGNLTGHAPILLLDEIAAHLDENRRAALFDIIDGLGGQAFMTGTDRGMFTALGDRAQFFTVADGRVFG.

34-41 contributes to the ATP binding site; that stretch reads GDNGAGKT.

The protein belongs to the RecF family.

It localises to the cytoplasm. Its function is as follows. The RecF protein is involved in DNA metabolism; it is required for DNA replication and normal SOS inducibility. RecF binds preferentially to single-stranded, linear DNA. It also seems to bind ATP. This Rhizobium etli (strain ATCC 51251 / DSM 11541 / JCM 21823 / NBRC 15573 / CFN 42) protein is DNA replication and repair protein RecF.